Reading from the N-terminus, the 75-residue chain is UPF0270 protein Avin_35000 (75 aa).

Belongs to the UPF0270 family.

In Azotobacter vinelandii (strain DJ / ATCC BAA-1303), this protein is UPF0270 protein Avin_35000.